The sequence spans 2523 residues: Non-reducing polyketide synthase Preu3 (2523 aa).

Residues 58–247 are N-terminal acylcarrier protein transacylase domain (SAT); sequence LQSLASERRA…KILAMTGSFH (190 aa). Residues 373–792 form the Ketosynthase family 3 (KS3) domain; it reads DNAVAVVGMA…GSNGAMIVCQ (420 aa). Catalysis depends on for beta-ketoacyl synthase activity residues Cys-539, His-674, and His-715. The malonyl-CoA:ACP transacylase (MAT) domain stretch occupies residues 900-1207; sequence CFGGQVKAFV…KAFGSLADAT (308 aa). Ser-986 functions as the For acyl/malonyl transferase activity in the catalytic mechanism. The N-terminal hotdog fold stretch occupies residues 1271–1398; sequence HELLTFSSFE…GLVAFGGTVE (128 aa). A PKS/mFAS DH domain is found at 1271-1573; sequence HELLTFSSFE…FTRVTVPGLR (303 aa). The tract at residues 1301-1568 is product template (PT) domain; that stretch reads LVKGHAVVAQ…ALGCRFTRVT (268 aa). His-1305 serves as the catalytic Proton acceptor; for dehydratase activity. Residues 1421–1573 are C-terminal hotdog fold; sequence ECDALRGSAT…FTRVTVPGLR (153 aa). The active-site Proton donor; for dehydratase activity is Asp-1483. The disordered stretch occupies residues 1579-1601; it reads ANGDARAQERPSGSRISPSPLAP. The Carrier domain occupies 1639-1713; it reads VDYLAQVKAL…KLAEYLAKTL (75 aa). The residue at position 1673 (Ser-1673) is an O-(pantetheine 4'-phosphoryl)serine. Residues 1735 to 1757 are disordered; it reads DAEQSSDESPYDSTDDSASGYGD. The segment covering 1738–1749 has biased composition (acidic residues); the sequence is QSSDESPYDSTD. The tract at residues 1986-2085 is methyltransferase (CMeT) domain; sequence LEIGGGTGGT…MRQLLSSEGF (100 aa). The segment at 2218–2520 is thioesterase (TE) domain; the sequence is LILHGGGHVL…RALEWLVEQC (303 aa).

The cofactor is pantetheine 4'-phosphate.

It carries out the reaction 3 malonyl-CoA + acetyl-CoA + S-adenosyl-L-methionine + H(+) = 3-methylorsellinate + S-adenosyl-L-homocysteine + 3 CO2 + 4 CoA. Its function is as follows. Non-reducing polyketide synthase; part of a gene cluster that mediates the biosynthesis of a yet unidentified natural product. The first step in the pathway is performed by Preu3 that condenses one acetyl-CoA starter unit with 3 malonyl-CoA units. Preu3 also catalyzes one methylation step to produce 3-methylorsellinate, an intermediate that exhibits significant antibacterial activities against methicillin-resistant Staphylococcus aureus, multidrug-resistant Enterococcus faecalis, multidrug-resistant Enterococcus faecium, and multidrug-resistant Staphylococcus epidermidis. In Preussia isomera (Coprophilous fungus), this protein is Non-reducing polyketide synthase Preu3.